The sequence spans 445 residues: METIFAQSSAFGKAGVAVFRISGPKSLEVLQLLTGRKDFKSRLMYYQQITVPETKELIDNVMVVYFKSPGSFTGEDVVEIHTHGSKAISIMLTNALLNIAGIRLAEAGEFTKRAFLNNKLDLTAAEGIADLINAETIMQHKQAIRQASGKLEALYNNWRSQLLKILSLLEAYIDFPDEDIPDTVLNEVTNTHTILVNTISEYLNDNRKGELLRSGLKLAIIGPPNVGKSSLLNFLMQRDIAIVSNIAGTTRDIIEGHLDIGGYPIILQDTAGIREESSDIIEQEGIKRAINSAKTADIKIIMFDAEKLDSSINEDIINLIDENTITIINKIDLIEASKIFSIENKYKCLRVSVKNNIALSSILKNIENIAENMAGFTETPYITNQRHRNYLQQALSHLTAFSLDNDLVLATEDIRMTARCIGAITGVINVEEILGEIFKNFCIGK.

The (6S)-5-formyl-5,6,7,8-tetrahydrofolate site is built by Arg-20, Glu-79, and Lys-119. The 157-residue stretch at 215 to 371 folds into the TrmE-type G domain; that stretch reads GLKLAIIGPP…ILKNIENIAE (157 aa). Position 225 (Asn-225) interacts with K(+). GTP-binding positions include 225–230, 244–250, and 269–272; these read NVGKSS, SNIAGTT, and DTAG. Position 229 (Ser-229) interacts with Mg(2+). K(+) is bound by residues Ser-244, Ile-246, and Thr-249. Thr-250 contributes to the Mg(2+) binding site. Lys-445 serves as a coordination point for (6S)-5-formyl-5,6,7,8-tetrahydrofolate.

Belongs to the TRAFAC class TrmE-Era-EngA-EngB-Septin-like GTPase superfamily. TrmE GTPase family. Homodimer. Heterotetramer of two MnmE and two MnmG subunits. Requires K(+) as cofactor.

Its subcellular location is the cytoplasm. Its function is as follows. Exhibits a very high intrinsic GTPase hydrolysis rate. Involved in the addition of a carboxymethylaminomethyl (cmnm) group at the wobble position (U34) of certain tRNAs, forming tRNA-cmnm(5)s(2)U34. The chain is tRNA modification GTPase MnmE from Rickettsia rickettsii (strain Iowa).